The primary structure comprises 303 residues: Centromere protein O (303 aa).

The stretch at 38 to 77 (AALRKNQELVLELRKKRDELKAKIERHKAEIQAFRGREEA) forms a coiled coil.

Belongs to the CENP-O/MCM21 family.

The protein localises to the nucleus. It is found in the chromosome. The protein resides in the centromere. Probable component of a centromeric complex involved in assembly of kinetochore proteins, mitotic progression and chromosome segregation. The polypeptide is Centromere protein O (cenpo) (Xenopus tropicalis (Western clawed frog)).